The primary structure comprises 329 residues: Src kinase-associated phosphoprotein 2 (329 aa).

The disordered stretch occupies residues Y58–P95. Acidic residues predominate over residues D61–S70. In terms of domain architecture, PH spans S104 to K207. The segment at E240–D263 is disordered. The segment covering P243–P260 has biased composition (pro residues). The SH3 domain occupies D267 to A328.

It belongs to the SKAP family. Post-translationally, phosphorylated on tyrosines.

It localises to the cytoplasm. Its function is as follows. May be involved in B-cell and macrophage adhesion processes. May play a role in src signaling pathway. The polypeptide is Src kinase-associated phosphoprotein 2 (skap2) (Takifugu rubripes (Japanese pufferfish)).